The chain runs to 198 residues: ATP-dependent Clp protease proteolytic subunit (198 aa).

Catalysis depends on serine 98, which acts as the Nucleophile. The active site involves histidine 123.

The protein belongs to the peptidase S14 family. Fourteen ClpP subunits assemble into 2 heptameric rings which stack back to back to give a disk-like structure with a central cavity, resembling the structure of eukaryotic proteasomes.

The protein localises to the cytoplasm. The catalysed reaction is Hydrolysis of proteins to small peptides in the presence of ATP and magnesium. alpha-casein is the usual test substrate. In the absence of ATP, only oligopeptides shorter than five residues are hydrolyzed (such as succinyl-Leu-Tyr-|-NHMec, and Leu-Tyr-Leu-|-Tyr-Trp, in which cleavage of the -Tyr-|-Leu- and -Tyr-|-Trp bonds also occurs).. Its function is as follows. Cleaves peptides in various proteins in a process that requires ATP hydrolysis. Has a chymotrypsin-like activity. Plays a major role in the degradation of misfolded proteins. The sequence is that of ATP-dependent Clp protease proteolytic subunit from Ehrlichia ruminantium (strain Gardel).